Consider the following 313-residue polypeptide: N-acetyl-gamma-glutamyl-phosphate reductase (313 aa).

Residue Cys117 is part of the active site.

This sequence belongs to the NAGSA dehydrogenase family. Type 2 subfamily.

Its subcellular location is the cytoplasm. The catalysed reaction is N-acetyl-L-glutamate 5-semialdehyde + phosphate + NADP(+) = N-acetyl-L-glutamyl 5-phosphate + NADPH + H(+). It participates in amino-acid biosynthesis; L-arginine biosynthesis; N(2)-acetyl-L-ornithine from L-glutamate: step 3/4. Its function is as follows. Catalyzes the NADPH-dependent reduction of N-acetyl-5-glutamyl phosphate to yield N-acetyl-L-glutamate 5-semialdehyde. In Burkholderia cenocepacia (strain ATCC BAA-245 / DSM 16553 / LMG 16656 / NCTC 13227 / J2315 / CF5610) (Burkholderia cepacia (strain J2315)), this protein is N-acetyl-gamma-glutamyl-phosphate reductase.